Consider the following 1226-residue polypeptide: Integrin alpha pat-2 (1226 aa).

Residues 1–25 (MREGSFPRRIGLLLGLLGLLAGVAT) form the signal peptide. At 26-1154 (FNIDTKNVVV…IASEEGRDLP (1129 aa)) the chain is on the extracellular side. 7 FG-GAP repeats span residues 27–94 (NIDT…TCRE), 108–171 (NGSH…NAEE), 178–233 (EPAR…TDRP), 234–290 (NTEY…MMIN), 291–345 (LTDE…KPQY), 362–421 (GKQI…GVRE), and 425–488 (QKIE…PESA). Residues asparagine 108, asparagine 228, and asparagine 290 are each glycosylated (N-linked (GlcNAc...) asparagine). N-linked (GlcNAc...) asparagine glycosylation occurs at asparagine 608. The Cell attachment site signature appears at 620-622 (RGD). Asparagine 679 is a glycosylation site (N-linked (GlcNAc...) asparagine). Positions 709–733 (SVGGDGSKSAPACSPTSDEPDSDGK) are disordered. Residues asparagine 775 and asparagine 819 are each glycosylated (N-linked (GlcNAc...) asparagine). 2 disordered regions span residues 898-958 (LRIT…HVYE) and 982-1040 (DYEY…ARFS). The segment covering 920 to 931 (REEDDESYEDET) has biased composition (acidic residues). Low complexity predominate over residues 932–951 (TTQSQSTRHQSTQHQTHHQS). A compositionally biased stretch (acidic residues) spans 985 to 1005 (YIPDDQEYDGDDFEEEDDEDF). Residues 1010–1026 (SKRVKRNPTPKKKKKGG) are compositionally biased toward basic residues. Positions 1027–1040 (EHRGEPRSDKARFS) are enriched in basic and acidic residues. The helical transmembrane segment at 1155–1177 (WWLYLLAILIGLAILILLILLLW) threads the bilayer. The Cytoplasmic portion of the chain corresponds to 1178-1226 (RCGFFKRNRPPTEHAELRADRQPNAQYADSQSRYTSQDQYNQGRHGQML). The tract at residues 1191 to 1226 (HAELRADRQPNAQYADSQSRYTSQDQYNQGRHGQML) is disordered. Over residues 1200-1226 (PNAQYADSQSRYTSQDQYNQGRHGQML) the composition is skewed to polar residues.

The protein belongs to the integrin alpha chain family. In terms of assembly, heterodimer of an alpha and a beta subunit. Interacts with beta subunit pat-3. Interacts with dep-1. Component of an integrin containing attachment complex, composed of at least pat-2, pat-3, pat-4, pat-6, unc-52, unc-97 and unc-112. Expressed in body-wall muscle cells, distal tip cells, and vulval tissue.

It is found in the membrane. Functionally, required for muscle development probably through the regulation of the actin-myosin cytoskeleton. Component of an integrin containing attachment complex, which is required for muscle maintenance. During the formation of neuromuscular junctions at the larval stage, negatively regulates membrane protrusion from body wall muscles, probably through lamins such as epi-1, lam-2 and unc-52. Required for distal tip cell migration and dorsal pathfinding. Required for egg-laying. May play a role in cell motility and cell-cell interactions. Plays a role in vulval development. Probably within the alpha pat-2/beta pat-3 integrin receptor complex, plays a role in the negative regulation of let-23 signaling and vulval induction. This is probably partly by restricting the mobility of the let-23 receptor on the plasma membrane of vulval cells which thereby attenuates let-23 signaling. In Caenorhabditis elegans, this protein is Integrin alpha pat-2.